Reading from the N-terminus, the 253-residue chain is MTQEELDALMNGGDLENLEALETKEETKEEAKEEAKEEAKEEAKEKEEIKEESSSQKMTVKKEDAEKYGKISPNEWPPPPPTEEHKVVHQLDDVTRDSEVKATQIFDQLDLIGASAEKIAKMVKKIQEPLQKHQEIFDNLHGHFPHVESFKTALNEQQEILNALKSIEEEAANCSDSSMQAMDIMQFQDIHRQKIERVVNVMRALSQYMNSLFEGKIDDSKRVSSATFITGDDDKDLASADDIEALIASFGAK.

Residues 1 to 84 are disordered; sequence MTQEELDALM…EWPPPPPTEE (84 aa). Residues 21 to 69 show a composition bias toward basic and acidic residues; that stretch reads LETKEETKEEAKEEAKEEAKEEAKEKEEIKEESSSQKMTVKKEDAEKYG.

It belongs to the CheZ family. Interacts with ChePep; this interaction is essential for each other polar localization.

Its subcellular location is the cytoplasm. In terms of biological role, plays an important role in bacterial chemotaxis signal transduction pathway by accelerating the dephosphorylation of phosphorylated CheY (CheY-P). Also dephosphorylates CheV2 but not CheV1 or CheV3. In addition, forms a distinct chemotaxis regulatory complex with ChePep independently of the core chemotaxis signaling proteins. This Helicobacter pylori (strain ATCC 700392 / 26695) (Campylobacter pylori) protein is Protein phosphatase CheZ.